A 207-amino-acid chain; its full sequence is Guanylate kinase (207 aa).

In terms of domain architecture, Guanylate kinase-like spans 5–184 (GNLFIVSAPS…ALADLRAIIR (180 aa)). ATP is bound at residue 12-19 (APSGAGKS).

It belongs to the guanylate kinase family.

It is found in the cytoplasm. It catalyses the reaction GMP + ATP = GDP + ADP. Its function is as follows. Essential for recycling GMP and indirectly, cGMP. The chain is Guanylate kinase from Shewanella oneidensis (strain ATCC 700550 / JCM 31522 / CIP 106686 / LMG 19005 / NCIMB 14063 / MR-1).